Here is a 232-residue protein sequence, read N- to C-terminus: Large ribosomal subunit protein uL1 (232 aa).

It belongs to the universal ribosomal protein uL1 family. As to quaternary structure, part of the 50S ribosomal subunit.

Its function is as follows. Binds directly to 23S rRNA. The L1 stalk is quite mobile in the ribosome, and is involved in E site tRNA release. In terms of biological role, protein L1 is also a translational repressor protein, it controls the translation of the L11 operon by binding to its mRNA. This chain is Large ribosomal subunit protein uL1, found in Roseobacter denitrificans (strain ATCC 33942 / OCh 114) (Erythrobacter sp. (strain OCh 114)).